A 538-amino-acid polypeptide reads, in one-letter code: Eukaryotic translation initiation factor 3 subunit L (538 aa).

Positions 305–513 (TFSDILLYIQ…IHIADTKVSH (209 aa)) constitute a PCI domain.

The protein belongs to the eIF-3 subunit L family. In terms of assembly, component of the eukaryotic translation initiation factor 3 (eIF-3) complex. The eIF-3 complex interacts with pix.

Its subcellular location is the cytoplasm. In terms of biological role, component of the eukaryotic translation initiation factor 3 (eIF-3) complex, which is involved in protein synthesis of a specialized repertoire of mRNAs and, together with other initiation factors, stimulates binding of mRNA and methionyl-tRNAi to the 40S ribosome. The eIF-3 complex specifically targets and initiates translation of a subset of mRNAs involved in cell proliferation. This chain is Eukaryotic translation initiation factor 3 subunit L, found in Drosophila mojavensis (Fruit fly).